The following is a 308-amino-acid chain: Rhamnose-binding lectin (308 aa).

An N-terminal signal peptide occupies residues 1 to 23 (MMLILKLSLLSLLIATPGLLVSG). SUEL-type lectin domains are found at residues 27–115 (ITCY…SFDC), 123–213 (ICEH…YICT), and 218–308 (VCEG…YACV). Residue asparagine 110 is glycosylated (N-linked (GlcNAc...) asparagine).

As to quaternary structure, homotrimer. Expressed in eggs, but not in liver.

It is found in the secreted. Lectin that binds L-rhamnose. Also binds monosaccharides possessing steric similarity to the hydroxyl group orientation at C2 and C4 of the pyranose ring structure of L-rhamnose, such as L-mannose and L-lyxose. The polypeptide is Rhamnose-binding lectin (Silurus asotus (Amur catfish)).